Here is a 112-residue protein sequence, read N- to C-terminus: uncharacterized protein (112 aa).

The tract at residues 70–112 (GLYRGRRPPGRDAARPTTAILFAQGRPPLLDQRAPTRRGSHQR) is disordered.

This is an uncharacterized protein from Homo sapiens (Human).